A 181-amino-acid chain; its full sequence is uncharacterized protein (181 aa).

The tract at residues 126–148 (SYKDKEEEEDEDPEEDDDDPRVQ) is disordered. The segment covering 131-144 (EEEEDEDPEEDDDD) has biased composition (acidic residues).

Belongs to the chlamydial CPn_0422/CT_273/TC_0545 family.

This is an uncharacterized protein from Chlamydia pneumoniae (Chlamydophila pneumoniae).